A 348-amino-acid chain; its full sequence is Probable UDP-arabinopyranose mutase 5 (348 aa).

Residues 100 to 102 (DDD) carry the DXD motif motif. R148 is a glycosylation site (N-linked (Glc...) arginine).

The protein belongs to the RGP family. Heteromers with RGP1 and RGP2. Requires Mn(2+) as cofactor. Mg(2+) is required as a cofactor. In terms of processing, reversibly glycosylated in vitro by UDP-glucose, UDP-xylose and UDP-galactose, but not UDP-mannose. In terms of tissue distribution, widely expressed at low levels.

The protein localises to the cytoplasm. Its subcellular location is the cytosol. It localises to the golgi apparatus. It carries out the reaction UDP-beta-L-arabinofuranose = UDP-beta-L-arabinopyranose. Probable UDP-L-arabinose mutase involved in the biosynthesis of cell wall non-cellulosic polysaccharides. This chain is Probable UDP-arabinopyranose mutase 5, found in Arabidopsis thaliana (Mouse-ear cress).